The sequence spans 84 residues: MPVKEKVGVVISNKMQKTVVVKVESRYPHPIYSKTMIKTRKYLAHDEMSECNIGDQVLVQECRPLSKKKRWSVARIISRSSLIT.

This sequence belongs to the universal ribosomal protein uS17 family. Part of the 30S ribosomal subunit.

Its subcellular location is the plastid. It is found in the chloroplast. One of the primary rRNA binding proteins, it binds specifically to the 5'-end of 16S ribosomal RNA. This Thalassiosira pseudonana (Marine diatom) protein is Small ribosomal subunit protein uS17c (rps17).